Reading from the N-terminus, the 234-residue chain is Adenosine 5'-phosphosulfate reductase (234 aa).

Residues Cys120, Cys121, Cys203, and Cys206 each coordinate [4Fe-4S] cluster. Cys229 serves as the catalytic Nucleophile; cysteine thiosulfonate intermediate.

It belongs to the PAPS reductase family. CysH subfamily. Requires [4Fe-4S] cluster as cofactor.

It localises to the cytoplasm. It carries out the reaction [thioredoxin]-disulfide + sulfite + AMP + 2 H(+) = adenosine 5'-phosphosulfate + [thioredoxin]-dithiol. Its pathway is sulfur metabolism; hydrogen sulfide biosynthesis; sulfite from sulfate. Its function is as follows. Catalyzes the formation of sulfite from adenosine 5'-phosphosulfate (APS) using thioredoxin as an electron donor. The sequence is that of Adenosine 5'-phosphosulfate reductase from Bacillus mycoides (strain KBAB4) (Bacillus weihenstephanensis).